Here is a 261-residue protein sequence, read N- to C-terminus: tRNA pseudouridine synthase A (261 aa).

Catalysis depends on Asp-51, which acts as the Nucleophile. Tyr-109 lines the substrate pocket.

This sequence belongs to the tRNA pseudouridine synthase TruA family. In terms of assembly, homodimer.

The catalysed reaction is uridine(38/39/40) in tRNA = pseudouridine(38/39/40) in tRNA. Formation of pseudouridine at positions 38, 39 and 40 in the anticodon stem and loop of transfer RNAs. This chain is tRNA pseudouridine synthase A, found in Shewanella sp. (strain W3-18-1).